The primary structure comprises 275 residues: Voltage-dependent calcium channel gamma-5 subunit (275 aa).

Helical transmembrane passes span 8-28 (ALTL…GIAV), 103-123 (FPLV…IGHI), 129-149 (ILAF…VVGL), and 176-196 (GWSF…GVMS).

It belongs to the PMP-22/EMP/MP20 family. CACNG subfamily. The L-type calcium channel is composed of five subunits: alpha-1, alpha-2/delta, beta and gamma. Acts as an auxiliary subunit for AMPA-selective glutamate receptors (AMPARs). Found in a complex with GRIA1, GRIA2, GRIA3, GRIA4, CNIH2, CNIH3, CACNG2, CACNG3, CACNG4, CACNG7 and CACNG8. Interacts with GRIA1, GRIA2, GRIA3 and GRIA4.

The protein resides in the membrane. It localises to the postsynaptic density membrane. In terms of biological role, regulates the gating properties of AMPA-selective glutamate receptors (AMPARs). Modulates their gating properties by accelerating their rates of activation, deactivation and desensitization. Displays subunit-specific AMPA receptor regulation. Shows specificity for GRIA1, GRIA4 and the long isoform of GRIA2. Thought to stabilize the calcium channel in an inactivated (closed) state. The sequence is that of Voltage-dependent calcium channel gamma-5 subunit (CACNG5) from Homo sapiens (Human).